A 198-amino-acid chain; its full sequence is Recombination protein RecR (198 aa).

A C4-type zinc finger spans residues 56-71 (CTTCGNIDTHDPCAIC). The Toprim domain occupies 79–174 (RSLCVVEEVS…RLTQLAHGLP (96 aa)).

Belongs to the RecR family.

Functionally, may play a role in DNA repair. It seems to be involved in an RecBC-independent recombinational process of DNA repair. It may act with RecF and RecO. In Sphingopyxis alaskensis (strain DSM 13593 / LMG 18877 / RB2256) (Sphingomonas alaskensis), this protein is Recombination protein RecR.